Consider the following 4118-residue polypeptide: BEACH domain-containing protein lvsB (4118 aa).

The interval 1–35 is disordered; it reads MNRNFNNINNNNNNNNNYHGYQYHQQQQQQNQQQQ. Residues 198–218 form a helical membrane-spanning segment; that stretch reads GIPLSFLNFLITILLRILSLP. Residues 236-257 show a composition bias toward low complexity; it reads NFSGNNNNNFNNNNHYFNNNHN. Disordered stretches follow at residues 236–267, 332–382, and 621–644; these read NFSG…QHHQ, PLSS…SKNN, and ISSS…KNNN. Residues 258–267 are compositionally biased toward basic residues; that stretch reads NHNHHYQHHQ. Composition is skewed to low complexity over residues 332-381 and 621-636; these read PLSS…NSKN and ISSS…NSDG. The chain crosses the membrane as a helical span at residues 827 to 847; it reads YLVLYMIVTEILSLLLELLVP. Positions 1155–1170 are enriched in low complexity; it reads NGGSISPSSIINNMNS. Disordered regions lie at residues 1155–1213, 1599–1622, 1643–1681, 1928–1968, 2015–2044, 2537–2574, 2702–2741, 2754–2791, 2902–3007, 3245–3265, and 3348–3418; these read NGGS…FNNN, ANTT…TAVS, NSGI…STNL, GNFL…ISSS, STNN…SNSL, RRGS…NNNE, FSPS…TSDS, DQSN…NGIN, NTNS…NSNE, PLIP…TKDQ, and KTTA…NIVK. Low complexity-rich tracts occupy residues 1657–1678 and 1935–1968; these read SIGS…SGSS and SSSN…ISSS. Positions 2540 to 2571 are enriched in low complexity; it reads SSSSSTNSTTNNNNNNSSTTTTSNNNNNNNEN. Residues 2705-2738 are a coiled coil; it reads SRSKEKEKEKEKEKEKEKEKEKERERERETTNVT. Over residues 2706–2734 the composition is skewed to basic and acidic residues; sequence RSKEKEKEKEKEKEKEKEKEKERERERET. Composition is skewed to low complexity over residues 2758–2791 and 2902–2947; these read EESS…NGIN and NTNS…NSTN. Polar residues predominate over residues 2948–2962; sequence QTITDTTLSPASSNV. Composition is skewed to low complexity over residues 2963–2980 and 2988–3006; these read SISN…NNNS and SNIN…SNSN. One can recognise a BEACH-type PH domain in the interval 3303–3479; that stretch reads KLGEKVNEVF…DRDIVYDLIM (177 aa). Over residues 3357–3411 the composition is skewed to low complexity; sequence SNNNNNNNNNNNNNNNNNNNNSNDTTSSINSTTATNTNTTNTTTTNTTTTTTTTN. The 292-residue stretch at 3491-3782 folds into the BEACH domain; sequence AEVHGNILKM…QIFTKPHPKK (292 aa). 5 WD repeats span residues 3868–3907, 3924–3963, 3984–4027, 4029–4073, and 4075–4114; these read VLND…GTIM, GHTN…YINS, TFET…LAKQ, FVND…KIRT, and VSKS…GYSS.

It is found in the membrane. The protein localises to the lysosome. It localises to the endosome. Its function is as follows. Involved in negative regulation of lysosome biogenesis, by limiting the heterotypic fusion of early endosomes and postlysosomal compartments. The sequence is that of BEACH domain-containing protein lvsB (lvsB) from Dictyostelium discoideum (Social amoeba).